A 113-amino-acid polypeptide reads, in one-letter code: Large ribosomal subunit protein P2 (113 aa).

The segment at 60-113 (SKVSSLSAGAGPSGGAAAAGADAGAAEAEKEEEPQEEEADVNMGDIFGGDDEDY) is disordered. The span at 74-85 (GAAAAGADAGAA) shows a compositional bias: low complexity. Residues 88 to 99 (EKEEEPQEEEAD) show a composition bias toward acidic residues.

It belongs to the eukaryotic ribosomal protein P1/P2 family. As to quaternary structure, P1 and P2 exist as dimers at the large ribosomal subunit. Post-translationally, phosphorylated.

In terms of biological role, plays an important role in the elongation step of protein synthesis. The sequence is that of Large ribosomal subunit protein P2 from Euplotes raikovi.